The chain runs to 436 residues: T-box transcription factor T (436 aa).

Positions 51–219 (LWLRFKELTN…YNPFAKAFLD (169 aa)) form a DNA-binding region, T-box.

In terms of assembly, monomer. Binds DNA as a monomer.

It is found in the nucleus. Functionally, involved in the transcriptional regulation of genes required for mesoderm formation and differentiation. Binds to a palindromic T site 5'-TTCACACCTAGGTGTGAA-3' DNA sequence and activates gene transcription when bound to such a site. In Mus musculus (Mouse), this protein is T-box transcription factor T.